A 374-amino-acid chain; its full sequence is Alcohol dehydrogenase class-3 (374 aa).

At Ala2 the chain carries N-acetylalanine. The Zn(2+) site is built by Cys45, His67, Cys97, Cys100, Cys103, Cys111, and Cys174. At Lys233 the chain carries N6-succinyllysine. At Ser247 the chain carries Phosphoserine. The residue at position 315 (Lys315) is an N6-succinyllysine. Phosphoserine occurs at positions 324 and 351.

It belongs to the zinc-containing alcohol dehydrogenase family. Class-III subfamily. As to quaternary structure, homodimer. Requires Zn(2+) as cofactor.

It localises to the cytoplasm. It catalyses the reaction a primary alcohol + NAD(+) = an aldehyde + NADH + H(+). The catalysed reaction is a secondary alcohol + NAD(+) = a ketone + NADH + H(+). The enzyme catalyses S-(hydroxymethyl)glutathione + NADP(+) = S-formylglutathione + NADPH + H(+). It carries out the reaction S-(hydroxymethyl)glutathione + NAD(+) = S-formylglutathione + NADH + H(+). It catalyses the reaction 20-oxo-(5Z,8Z,11Z,14Z)-eicosatetraenoate + NAD(+) + H2O = (5Z,8Z,11Z,14Z)-eicosatetraenedioate + NADH + 2 H(+). The catalysed reaction is 20-hydroxy-(5Z,8Z,11Z,14Z)-eicosatetraenoate + NAD(+) = 20-oxo-(5Z,8Z,11Z,14Z)-eicosatetraenoate + NADH + H(+). The enzyme catalyses S-nitrosoglutathione + NADH + H(+) = S-(hydroxysulfenamide)glutathione + NAD(+). Its function is as follows. Catalyzes the oxidation of long-chain primary alcohols and the oxidation of S-(hydroxymethyl) glutathione. Also oxidizes long chain omega-hydroxy fatty acids, such as 20-HETE, producing both the intermediate aldehyde, 20-oxoarachidonate and the end product, a dicarboxylic acid, (5Z,8Z,11Z,14Z)-eicosatetraenedioate. Class-III ADH is remarkably ineffective in oxidizing ethanol. Required for clearance of cellular formaldehyde, a cytotoxic and carcinogenic metabolite that induces DNA damage. Also acts as a S-nitroso-glutathione reductase by catalyzing the NADH-dependent reduction of S-nitrosoglutathione, thereby regulating protein S-nitrosylation. The polypeptide is Alcohol dehydrogenase class-3 (Oryctolagus cuniculus (Rabbit)).